A 450-amino-acid polypeptide reads, in one-letter code: UDP-N-acetylmuramoylalanine--D-glutamate ligase (450 aa).

Gly-119 to Thr-125 is a binding site for ATP.

Belongs to the MurCDEF family.

It is found in the cytoplasm. The enzyme catalyses UDP-N-acetyl-alpha-D-muramoyl-L-alanine + D-glutamate + ATP = UDP-N-acetyl-alpha-D-muramoyl-L-alanyl-D-glutamate + ADP + phosphate + H(+). It participates in cell wall biogenesis; peptidoglycan biosynthesis. Its function is as follows. Cell wall formation. Catalyzes the addition of glutamate to the nucleotide precursor UDP-N-acetylmuramoyl-L-alanine (UMA). This is UDP-N-acetylmuramoylalanine--D-glutamate ligase from Bacillus mycoides (strain KBAB4) (Bacillus weihenstephanensis).